Here is a 453-residue protein sequence, read N- to C-terminus: Pup--protein ligase (453 aa).

A Mg(2+)-binding site is contributed by Glu9. Arg53 is a binding site for ATP. Tyr55 lines the Mg(2+) pocket. Catalysis depends on Asp57, which acts as the Proton acceptor. Glu63 provides a ligand contact to Mg(2+). The ATP site is built by Thr66 and Trp420.

It belongs to the Pup ligase/Pup deamidase family. Pup-conjugating enzyme subfamily.

The catalysed reaction is ATP + [prokaryotic ubiquitin-like protein]-L-glutamate + [protein]-L-lysine = ADP + phosphate + N(6)-([prokaryotic ubiquitin-like protein]-gamma-L-glutamyl)-[protein]-L-lysine.. It participates in protein degradation; proteasomal Pup-dependent pathway. Its pathway is protein modification; protein pupylation. Its function is as follows. Catalyzes the covalent attachment of the prokaryotic ubiquitin-like protein modifier Pup to the proteasomal substrate proteins, thereby targeting them for proteasomal degradation. This tagging system is termed pupylation. The ligation reaction involves the side-chain carboxylate of the C-terminal glutamate of Pup and the side-chain amino group of a substrate lysine. In Kineococcus radiotolerans (strain ATCC BAA-149 / DSM 14245 / SRS30216), this protein is Pup--protein ligase.